Consider the following 393-residue polypeptide: Protein TsgA (393 aa).

Residues 1-10 are Cytoplasmic-facing; it reads MTNSNRIKLT. A helical membrane pass occupies residues 11–31; the sequence is WISFLSYALTGALVIVTGMVM. At 32–50 the chain is on the periplasmic side; that stretch reads GNIADYFHLPVSSMSNTFT. The helical transmembrane segment at 51–71 threads the bilayer; sequence FLNAGILISIFLNAWLMEIIP. The Cytoplasmic segment spans residues 72–77; sequence LKTQLR. The chain crosses the membrane as a helical span at residues 78–98; it reads FGFILMVLAVAGLMFGHSLAL. Over 99–100 the chain is Periplasmic; sequence FS. Residues 101–121 traverse the membrane as a helical segment; sequence AAMFVLGLVSGITMSIGTFLI. The Cytoplasmic segment spans residues 122 to 133; it reads TQLYEGRQRGSR. The chain crosses the membrane as a helical span at residues 134–154; sequence LLFTDSFFSMAGMIFPMVAAF. Over 155 to 161 the chain is Periplasmic; that stretch reads LLARSIE. A helical membrane pass occupies residues 162-182; sequence WYWVYACIGLVYLAIFILTFG. At 183–205 the chain is on the cytoplasmic side; the sequence is CEFPALGKHAQHSQAPVVKEKWG. Residues 206–226 form a helical membrane-spanning segment; it reads IGVLFLAVAALCYILGQLGFI. The Periplasmic portion of the chain corresponds to 227–244; that stretch reads SWVPEYAKGLGMSLNDAG. Residues 245–265 form a helical membrane-spanning segment; sequence ALVSDFWMSYMFGMWAFSFIL. Over 266–272 the chain is Cytoplasmic; that stretch reads RFFDLQR. Residues 273–293 form a helical membrane-spanning segment; the sequence is ILTVLAGMAAVLMYLFITGTQ. The Periplasmic segment spans residues 294–297; that stretch reads AHMP. A helical transmembrane segment spans residues 298–318; it reads WFILTLGFFSSAIYTSIITLG. Topologically, residues 319–331 are cytoplasmic; that stretch reads SQQTKVASPKLVN. A helical transmembrane segment spans residues 332 to 352; it reads FILTCGTIGTMLTFVVTGPIV. Residues 353–360 lie on the Periplasmic side of the membrane; sequence AHSGPQAA. A helical membrane pass occupies residues 361 to 381; that stretch reads LLTANGLYAVVFVMCFALGFV. Topologically, residues 382-393 are cytoplasmic; the sequence is SRHRQHSAPATH.

Belongs to the major facilitator superfamily. TsgA family.

It localises to the cell inner membrane. The chain is Protein TsgA from Salmonella choleraesuis (strain SC-B67).